The sequence spans 485 residues: Lysine--tRNA ligase (485 aa).

Positions 391 and 398 each coordinate Mg(2+).

The protein belongs to the class-II aminoacyl-tRNA synthetase family. Homodimer. Mg(2+) is required as a cofactor.

It is found in the cytoplasm. The enzyme catalyses tRNA(Lys) + L-lysine + ATP = L-lysyl-tRNA(Lys) + AMP + diphosphate. This Blochmanniella floridana protein is Lysine--tRNA ligase.